We begin with the raw amino-acid sequence, 159 residues long: Phosphopantetheine adenylyltransferase (159 aa).

A substrate-binding site is contributed by Ser-9. ATP is bound by residues Ser-9–Phe-10 and His-17. Substrate is bound by residues Lys-41, Leu-73, and Lys-87. ATP is bound by residues Gly-88 to Arg-90, Glu-98, and Tyr-122 to Ser-128.

It belongs to the bacterial CoaD family. In terms of assembly, homohexamer. The cofactor is Mg(2+).

The protein localises to the cytoplasm. The enzyme catalyses (R)-4'-phosphopantetheine + ATP + H(+) = 3'-dephospho-CoA + diphosphate. The protein operates within cofactor biosynthesis; coenzyme A biosynthesis; CoA from (R)-pantothenate: step 4/5. In terms of biological role, reversibly transfers an adenylyl group from ATP to 4'-phosphopantetheine, yielding dephospho-CoA (dPCoA) and pyrophosphate. This chain is Phosphopantetheine adenylyltransferase, found in Streptomyces griseus subsp. griseus (strain JCM 4626 / CBS 651.72 / NBRC 13350 / KCC S-0626 / ISP 5235).